We begin with the raw amino-acid sequence, 434 residues long: Putative ankyrin repeat protein FPV023 (434 aa).

ANK repeat units follow at residues 33 to 62, 134 to 163, 167 to 197, 201 to 230, 236 to 265, 269 to 299, and 303 to 330; these read RLKI…DPVA, LTIS…DINF, IGNT…DINI, YGTT…DPNS, IGTK…DPNI, AGVT…DPNI, and NGTT…DINI.

In Fowlpox virus (strain NVSL) (FPV), this protein is Putative ankyrin repeat protein FPV023.